The following is a 211-amino-acid chain: Protein-L-isoaspartate O-methyltransferase (211 aa).

The active site involves serine 60.

It belongs to the methyltransferase superfamily. L-isoaspartyl/D-aspartyl protein methyltransferase family.

Its subcellular location is the cytoplasm. It catalyses the reaction [protein]-L-isoaspartate + S-adenosyl-L-methionine = [protein]-L-isoaspartate alpha-methyl ester + S-adenosyl-L-homocysteine. Its function is as follows. Catalyzes the methyl esterification of L-isoaspartyl residues in peptides and proteins that result from spontaneous decomposition of normal L-aspartyl and L-asparaginyl residues. It plays a role in the repair and/or degradation of damaged proteins. The polypeptide is Protein-L-isoaspartate O-methyltransferase (Pseudomonas syringae pv. tomato (strain ATCC BAA-871 / DC3000)).